Here is a 289-residue protein sequence, read N- to C-terminus: Acetyl-coenzyme A carboxylase carboxyl transferase subunit beta (289 aa).

Residues 28-289 (LWSKCPSCEA…ALLQKLPAAA (262 aa)) form the CoA carboxyltransferase N-terminal domain. The Zn(2+) site is built by C32, C35, C51, and C54. Residues 32–54 (CPSCEAVLYATDLENNLQVCPKC) form a C4-type zinc finger.

Belongs to the AccD/PCCB family. In terms of assembly, acetyl-CoA carboxylase is a heterohexamer composed of biotin carboxyl carrier protein (AccB), biotin carboxylase (AccC) and two subunits each of ACCase subunit alpha (AccA) and ACCase subunit beta (AccD). Requires Zn(2+) as cofactor.

The protein resides in the cytoplasm. It catalyses the reaction N(6)-carboxybiotinyl-L-lysyl-[protein] + acetyl-CoA = N(6)-biotinyl-L-lysyl-[protein] + malonyl-CoA. It participates in lipid metabolism; malonyl-CoA biosynthesis; malonyl-CoA from acetyl-CoA: step 1/1. In terms of biological role, component of the acetyl coenzyme A carboxylase (ACC) complex. Biotin carboxylase (BC) catalyzes the carboxylation of biotin on its carrier protein (BCCP) and then the CO(2) group is transferred by the transcarboxylase to acetyl-CoA to form malonyl-CoA. This chain is Acetyl-coenzyme A carboxylase carboxyl transferase subunit beta, found in Dechloromonas aromatica (strain RCB).